Here is a 122-residue protein sequence, read N- to C-terminus: Large ribosomal subunit protein uL14 (122 aa).

The protein belongs to the universal ribosomal protein uL14 family. In terms of assembly, part of the 50S ribosomal subunit. Forms a cluster with proteins L3 and L19. In the 70S ribosome, L14 and L19 interact and together make contacts with the 16S rRNA in bridges B5 and B8.

In terms of biological role, binds to 23S rRNA. Forms part of two intersubunit bridges in the 70S ribosome. The chain is Large ribosomal subunit protein uL14 from Heliobacterium modesticaldum (strain ATCC 51547 / Ice1).